The primary structure comprises 153 residues: Transcriptional repressor NrdR (153 aa).

A zinc finger spans residues C3–C34. Positions L46–D136 constitute an ATP-cone domain.

The protein belongs to the NrdR family. Zn(2+) serves as cofactor.

Its function is as follows. Negatively regulates transcription of bacterial ribonucleotide reductase nrd genes and operons by binding to NrdR-boxes. In Thermobifida fusca (strain YX), this protein is Transcriptional repressor NrdR.